Consider the following 930-residue polypeptide: Isoleucine--tRNA ligase (930 aa).

The 'HIGH' region motif lies at 57–67 (PYANGNIHVGH). Glutamate 554 lines the L-isoleucyl-5'-AMP pocket. Positions 595–599 (KMSKS) match the 'KMSKS' region motif. ATP is bound at residue lysine 598. Zn(2+)-binding residues include cysteine 888, cysteine 891, cysteine 908, and cysteine 911.

The protein belongs to the class-I aminoacyl-tRNA synthetase family. IleS type 1 subfamily. In terms of assembly, monomer. Requires Zn(2+) as cofactor.

The protein resides in the cytoplasm. It carries out the reaction tRNA(Ile) + L-isoleucine + ATP = L-isoleucyl-tRNA(Ile) + AMP + diphosphate. Its function is as follows. Catalyzes the attachment of isoleucine to tRNA(Ile). As IleRS can inadvertently accommodate and process structurally similar amino acids such as valine, to avoid such errors it has two additional distinct tRNA(Ile)-dependent editing activities. One activity is designated as 'pretransfer' editing and involves the hydrolysis of activated Val-AMP. The other activity is designated 'posttransfer' editing and involves deacylation of mischarged Val-tRNA(Ile). This is Isoleucine--tRNA ligase from Streptococcus mutans serotype c (strain ATCC 700610 / UA159).